The following is a 583-amino-acid chain: Thiol:disulfide interchange protein DsbD (583 aa).

Residues Met-1–Ala-18 form the signal peptide. 2 cysteine pairs are disulfide-bonded: Cys-118-Cys-124 and Cys-186-Cys-306. Helical transmembrane passes span Gly-168 to Leu-188, Ser-214 to Gly-234, Trp-245 to Phe-265, Leu-289 to Ala-309, Phe-326 to Val-346, Trp-359 to Leu-379, Val-382 to Cys-402, and Leu-413 to Val-433. The 124-residue stretch at Val-458 to Glu-581 folds into the Thioredoxin domain. Cys-496 and Cys-499 are joined by a disulfide.

This sequence belongs to the thioredoxin family. DsbD subfamily.

The protein localises to the cell inner membrane. It catalyses the reaction [protein]-dithiol + NAD(+) = [protein]-disulfide + NADH + H(+). The catalysed reaction is [protein]-dithiol + NADP(+) = [protein]-disulfide + NADPH + H(+). Functionally, required to facilitate the formation of correct disulfide bonds in some periplasmic proteins and for the assembly of the periplasmic c-type cytochromes. Acts by transferring electrons from cytoplasmic thioredoxin to the periplasm. This transfer involves a cascade of disulfide bond formation and reduction steps. In Pseudomonas fluorescens (strain ATCC BAA-477 / NRRL B-23932 / Pf-5), this protein is Thiol:disulfide interchange protein DsbD.